The primary structure comprises 252 residues: 3-dehydroquinate dehydratase (252 aa).

3-dehydroquinate-binding positions include S21, 46-48 (EWR), and R82. H143 acts as the Proton donor/acceptor in catalysis. Residue K170 is the Schiff-base intermediate with substrate of the active site. 3-dehydroquinate is bound by residues R213, S232, and Q236.

Belongs to the type-I 3-dehydroquinase family. Homodimer.

It carries out the reaction 3-dehydroquinate = 3-dehydroshikimate + H2O. It participates in metabolic intermediate biosynthesis; chorismate biosynthesis; chorismate from D-erythrose 4-phosphate and phosphoenolpyruvate: step 3/7. Inhibited by (2R)-2-methyl-3-dehydroquinic acid. Involved in the third step of the chorismate pathway, which leads to the biosynthesis of aromatic amino acids. Catalyzes the cis-dehydration of 3-dehydroquinate (DHQ) and introduces the first double bond of the aromatic ring to yield 3-dehydroshikimate. The reaction involves the formation of an imine intermediate between the keto group of 3-dehydroquinate and the epsilon-amino group of a Lys-170 at the active site. This is 3-dehydroquinate dehydratase from Salmonella typhimurium (strain LT2 / SGSC1412 / ATCC 700720).